A 277-amino-acid polypeptide reads, in one-letter code: Large ribosomal subunit protein uL2c (277 aa).

The tract at residues 224–257 (VMNPIDHPHGGGEGRAPIGRKKPLTPWGHPALGR) is disordered.

Belongs to the universal ribosomal protein uL2 family. As to quaternary structure, part of the 50S ribosomal subunit.

It is found in the plastid. Its subcellular location is the chloroplast. This chain is Large ribosomal subunit protein uL2c (rpl2), found in Anthoceros angustus (Hornwort).